Here is a 610-residue protein sequence, read N- to C-terminus: NTPase KAP family P-loop domain-containing protein 1 (610 aa).

The region spanning 1 to 414 is the KAP NTPase domain; sequence MQQEAAQRES…NTVPITVRLL (414 aa). 3 helical membrane-spanning segments follow: residues 22–42, 118–138, and 157–177; these read AVSGWGVPQLLWYLVFLQPII, VCLGLLALLAALGLGVGLLYL, and VFGGAATTLSGSGLLMAVYSV. A disordered region spans residues 540–587; it reads ALKPPSPPKSPTRDTPHAAHRANSASRAPPSGRASGQAGEGHHTGDLA. The span at 560–575 shows a compositional bias: low complexity; that stretch reads RANSASRAPPSGRASG.

It is found in the membrane. The protein is NTPase KAP family P-loop domain-containing protein 1 (NKPD1) of Homo sapiens (Human).